Reading from the N-terminus, the 416-residue chain is Putative competence-damage inducible protein (416 aa).

This sequence belongs to the CinA family.

This Bacillus pumilus (strain SAFR-032) protein is Putative competence-damage inducible protein.